Reading from the N-terminus, the 184-residue chain is ATP synthase subunit b, chloroplastic (184 aa).

A helical membrane pass occupies residues 29 to 49 (INIINLGIVIGLLVYLGEGVL).

The protein belongs to the ATPase B chain family. In terms of assembly, F-type ATPases have 2 components, F(1) - the catalytic core - and F(0) - the membrane proton channel. F(1) has five subunits: alpha(3), beta(3), gamma(1), delta(1), epsilon(1). F(0) has four main subunits: a(1), b(1), b'(1) and c(10-14). The alpha and beta chains form an alternating ring which encloses part of the gamma chain. F(1) is attached to F(0) by a central stalk formed by the gamma and epsilon chains, while a peripheral stalk is formed by the delta, b and b' chains.

The protein resides in the plastid. Its subcellular location is the chloroplast thylakoid membrane. Its function is as follows. F(1)F(0) ATP synthase produces ATP from ADP in the presence of a proton or sodium gradient. F-type ATPases consist of two structural domains, F(1) containing the extramembraneous catalytic core and F(0) containing the membrane proton channel, linked together by a central stalk and a peripheral stalk. During catalysis, ATP synthesis in the catalytic domain of F(1) is coupled via a rotary mechanism of the central stalk subunits to proton translocation. In terms of biological role, component of the F(0) channel, it forms part of the peripheral stalk, linking F(1) to F(0). This Psilotum nudum (Whisk fern) protein is ATP synthase subunit b, chloroplastic.